We begin with the raw amino-acid sequence, 375 residues long: ATP-dependent kinase YFH7 (375 aa).

66-74 (GPPGSGKST) contacts ATP.

It belongs to the YFH7 family.

ATP-dependent kinase that could be involved in endoplasmic reticulum membrane assembly. The polypeptide is ATP-dependent kinase YFH7 (YFH7) (Zygosaccharomyces rouxii (strain ATCC 2623 / CBS 732 / NBRC 1130 / NCYC 568 / NRRL Y-229)).